The chain runs to 480 residues: UDP-N-acetylmuramate--L-alanine ligase (480 aa).

129–135 (GSHGKTT) is a binding site for ATP.

It belongs to the MurCDEF family.

It localises to the cytoplasm. The enzyme catalyses UDP-N-acetyl-alpha-D-muramate + L-alanine + ATP = UDP-N-acetyl-alpha-D-muramoyl-L-alanine + ADP + phosphate + H(+). Its pathway is cell wall biogenesis; peptidoglycan biosynthesis. Functionally, cell wall formation. The sequence is that of UDP-N-acetylmuramate--L-alanine ligase from Syntrophus aciditrophicus (strain SB).